The primary structure comprises 464 residues: Protein ABHD18 (464 aa).

The signal sequence occupies residues 1 to 24 (MGVSKLDILYRRLLLTKLFIRGWG). N-linked (GlcNAc...) asparagine glycosylation occurs at N341.

It belongs to the AB hydrolase superfamily.

It localises to the secreted. The polypeptide is Protein ABHD18 (Mus musculus (Mouse)).